Here is a 346-residue protein sequence, read N- to C-terminus: Large ribosomal subunit protein uL10 (346 aa).

Residues 305 to 346 (EVPAAPAPEAKEEKKEEAEEEEEEKKEVSEEDLSAGLGALFG) form a disordered region. The segment covering 322 to 337 (AEEEEEEKKEVSEEDL) has biased composition (acidic residues).

This sequence belongs to the universal ribosomal protein uL10 family. Part of the 50S ribosomal subunit. Forms part of the ribosomal stalk which helps the ribosome interact with GTP-bound translation factors. Forms a heptameric L10(L12)2(L12)2(L12)2 complex, where L10 forms an elongated spine to which the L12 dimers bind in a sequential fashion.

In terms of biological role, forms part of the ribosomal stalk, playing a central role in the interaction of the ribosome with GTP-bound translation factors. The chain is Large ribosomal subunit protein uL10 from Ignicoccus hospitalis (strain KIN4/I / DSM 18386 / JCM 14125).